Here is a 95-residue protein sequence, read N- to C-terminus: Small ubiquitin-related modifier 4 (95 aa).

One can recognise a Ubiquitin-like domain in the interval 17 to 95 (HINLKVAGQD…VLQQQTGGVY (79 aa)). Residue Gly-93 forms a Glycyl lysine isopeptide (Gly-Lys) (interchain with K-? in acceptor proteins) linkage. The propeptide occupies 94–95 (VY).

This sequence belongs to the ubiquitin family. SUMO subfamily. As to quaternary structure, interacts with SAE2. Covalently attached to a number of proteins.

Functionally, ubiquitin-like protein which can be covalently attached to target lysines as a monomer. Does not seem to be involved in protein degradation and may modulate protein subcellular localization, stability or activity. Upon oxidative stress, conjugates to various anti-oxidant enzymes, chaperones, and stress defense proteins. May also conjugate to NFKBIA, TFAP2A and FOS, negatively regulating their transcriptional activity, and to NR3C1, positively regulating its transcriptional activity. Covalent attachment to its substrates requires prior activation by the E1 complex SAE1-SAE2 and linkage to the E2 enzyme UBE2I. This is Small ubiquitin-related modifier 4 (SUMO4) from Sus scrofa (Pig).